The sequence spans 253 residues: Indole-3-glycerol phosphate synthase (253 aa).

Belongs to the TrpC family.

It carries out the reaction 1-(2-carboxyphenylamino)-1-deoxy-D-ribulose 5-phosphate + H(+) = (1S,2R)-1-C-(indol-3-yl)glycerol 3-phosphate + CO2 + H2O. It functions in the pathway amino-acid biosynthesis; L-tryptophan biosynthesis; L-tryptophan from chorismate: step 4/5. This Bacillus thuringiensis subsp. konkukian (strain 97-27) protein is Indole-3-glycerol phosphate synthase.